A 450-amino-acid chain; its full sequence is Phospho-2-dehydro-3-deoxyheptonate aldolase (450 aa).

The span at 1–13 (MTVNAKTSPSAGN) shows a compositional bias: polar residues. The interval 1–20 (MTVNAKTSPSAGNTWRDLPA) is disordered.

The protein belongs to the class-II DAHP synthase family. Homodimer.

The enzyme catalyses D-erythrose 4-phosphate + phosphoenolpyruvate + H2O = 7-phospho-2-dehydro-3-deoxy-D-arabino-heptonate + phosphate. It functions in the pathway metabolic intermediate biosynthesis; chorismate biosynthesis; chorismate from D-erythrose 4-phosphate and phosphoenolpyruvate: step 1/7. In Streptomyces coelicolor (strain ATCC BAA-471 / A3(2) / M145), this protein is Phospho-2-dehydro-3-deoxyheptonate aldolase (aroH).